A 499-amino-acid chain; its full sequence is Glycerol kinase (499 aa).

Residue Thr15 coordinates ADP. ATP-binding residues include Thr15, Thr16, and Ser17. Residue Thr15 coordinates sn-glycerol 3-phosphate. Arg19 is an ADP binding site. Sn-glycerol 3-phosphate-binding residues include Arg85, Glu86, Tyr137, and Asp246. Glycerol contacts are provided by Arg85, Glu86, Tyr137, Asp246, and Gln247. 2 residues coordinate ADP: Thr268 and Gly311. ATP contacts are provided by Thr268, Gly311, Gln315, and Gly412. ADP contacts are provided by Gly412 and Asn416.

Belongs to the FGGY kinase family.

It carries out the reaction glycerol + ATP = sn-glycerol 3-phosphate + ADP + H(+). The protein operates within polyol metabolism; glycerol degradation via glycerol kinase pathway; sn-glycerol 3-phosphate from glycerol: step 1/1. Inhibited by fructose 1,6-bisphosphate (FBP). Key enzyme in the regulation of glycerol uptake and metabolism. Catalyzes the phosphorylation of glycerol to yield sn-glycerol 3-phosphate. The polypeptide is Glycerol kinase (Parabacteroides distasonis (strain ATCC 8503 / DSM 20701 / CIP 104284 / JCM 5825 / NCTC 11152)).